The primary structure comprises 762 residues: ABC-type oligopeptide transporter ABCB9 (762 aa).

Helical transmembrane passes span 7–27, 47–67, 84–104, 116–136, 181–201, 221–241, 315–335, and 412–432; these read VVVTLAFVSTDVGVTTAIYAF, VLDLWAACLYRSCLLLGATIG, LVITLVCLFVGIYAMAKLLLF, FWALFVWTYISLAASFLLWGL, VAFLVAASFFLIVAALGETFL, FTTAVVVVCLLAIGSSLAAGI, VFMFSLSWQLSLVTFMGFPII, and SGLTLLVVQVSILYYGGHLVI. The ABC transmembrane type-1 domain maps to 184–467; that stretch reads LVAASFFLIV…VGSVYSGLMQ (284 aa). An ABC transporter domain is found at 500–736; it reads VDFENVTFTY…GGLYAKLVQR (237 aa). Residue 535–542 participates in ATP binding; it reads GPSGSGKS.

It belongs to the ABC transporter superfamily. ABCB family. MHC peptide exporter (TC 3.A.1.209) subfamily. In terms of assembly, homodimer. Interacts (via TMD0 region) with LAMP1; this interaction strongly stabilizes ABCB9 and protects ABCB9 against lysosomal degradation. Interacts (via TMD0 region) with LAMP2 (isoform LAMP-2B). Interacts (via TMD0) with YIF1B; this interaction allows (but is not essential) the ER-to-Golgi trafficking and strongly depends on a salt bridge within TMD0. In terms of tissue distribution, highly expressed in testis, particularly in the Sertoli cells of the seminiferous tubules, and at moderate levels in brain and spinal cord.

The protein resides in the lysosome membrane. The enzyme catalyses a [oligopeptide](in) + ATP + H2O = a [oligopeptide](out) + ADP + phosphate + H(+). Functionally, ATP-dependent low-affinity peptide transporter which translocates a broad spectrum of peptides from the cytosol to the lysosomal lumen for degradation. Displays a broad peptide length specificity from 6-mer up to at least 59-mer peptides with an optimum of 23-mers. Binds and transports smaller and larger peptides with the same affinity. Favors positively charged, aromatic or hydrophobic residues in the N- and C-terminal positions whereas negatively charged residues as well as asparagine and methionine are not favored. This is ABC-type oligopeptide transporter ABCB9 from Mus musculus (Mouse).